Here is a 141-residue protein sequence, read N- to C-terminus: Cystatin-13 (141 aa).

The N-terminal stretch at 1-24 is a signal peptide; sequence MARFLQTLLFLVIMVEFVSRRVEA. The tract at residues 76 to 80 is secondary area of contact; it reads QITDS. 2 disulfide bridges follow: C94/C104 and C118/C138.

The protein belongs to the cystatin family. In terms of tissue distribution, expressed exclusively in testis. Found in spermatagonia, spermatocytes, round spermatids, elongating spermatids and spermatozoa.

The protein localises to the secreted. Its subcellular location is the cytoplasm. Its function is as follows. May perform a specialized role during sperm development and maturation. In Mus musculus (Mouse), this protein is Cystatin-13.